The following is a 96-amino-acid chain: Small ribosomal subunit protein bS6 (96 aa).

Belongs to the bacterial ribosomal protein bS6 family.

Functionally, binds together with bS18 to 16S ribosomal RNA. The chain is Small ribosomal subunit protein bS6 (rpsF) from Mycobacterium leprae (strain TN).